Reading from the N-terminus, the 396-residue chain is Elongation factor Tu 1 (396 aa).

Positions 10-206 constitute a tr-type G domain; the sequence is KPHVNVGTIG…ALDTYIPTPK (197 aa). The segment at 19-26 is G1; that stretch reads GHVDHGKT. 19-26 provides a ligand contact to GTP; it reads GHVDHGKT. Thr-26 serves as a coordination point for Mg(2+). The segment at 60–64 is G2; it reads GITIS. Residues 81–84 form a G3 region; the sequence is DCPG. Residues 81–85 and 136–139 contribute to the GTP site; these read DCPGH and NKAD. Residues 136–139 form a G4 region; that stretch reads NKAD. The interval 174–176 is G5; the sequence is SAL.

It belongs to the TRAFAC class translation factor GTPase superfamily. Classic translation factor GTPase family. EF-Tu/EF-1A subfamily. In terms of assembly, monomer.

It localises to the cytoplasm. It catalyses the reaction GTP + H2O = GDP + phosphate + H(+). In terms of biological role, GTP hydrolase that promotes the GTP-dependent binding of aminoacyl-tRNA to the A-site of ribosomes during protein biosynthesis. This is Elongation factor Tu 1 from Ruthia magnifica subsp. Calyptogena magnifica.